Reading from the N-terminus, the 317-residue chain is MAGLAGPAKPSLALNPQEDSQFEKALTQIQGRTKKPQQKKKEKLNRGVVYLGHLPSTLSESHIYNYCAQFGDISRFRLSRSKRTGNSKGYAFVEFESEDVAKIVAETMDNYLFGERLLSCKFMPRKKVHKDLFSQRNALFHRPSFPAVKRYNRKRGHLQMLKMEYRFKKKEKLLRKKLAAKGIDYSFPSLVLPKPKNIAVAHRDSEGNQVLPDQKEGLSGEPRRKEKMMKEDISNNIPKKRKRSRRKKSSVDSQGPTPVCTPTFLERRKSQVMEVGGDKDDEIILKLPVPPVKEDTQKTPTSASPGGKRPRKRKSKQ.

Alanine 2 is modified (N-acetylalanine). A Glycyl lysine isopeptide (Lys-Gly) (interchain with G-Cter in SUMO2) cross-link involves residue lysine 40. In terms of domain architecture, RRM spans 47-125 (GVVYLGHLPS…RLLSCKFMPR (79 aa)). Arginine 116 carries the post-translational modification Omega-N-methylarginine. Glycyl lysine isopeptide (Lys-Gly) (interchain with G-Cter in SUMO2) cross-links involve residues lysine 181 and lysine 194. Citrulline is present on arginine 203. The tract at residues 203-317 (RDSEGNQVLP…KRPRKRKSKQ (115 aa)) is disordered. A compositionally biased stretch (basic and acidic residues) spans 213–233 (DQKEGLSGEPRRKEKMMKEDI). Serine 219 is subject to Phosphoserine. Positions 238-248 (PKKRKRSRRKK) are enriched in basic residues. A Phosphoserine modification is found at serine 253. Threonine 257 and threonine 261 each carry phosphothreonine. The span at 265–284 (LERRKSQVMEVGGDKDDEII) shows a compositional bias: basic and acidic residues. 2 positions are modified to omega-N-methylated arginine: arginine 267 and arginine 268. At serine 270 the chain carries Phosphoserine. Lysine 293 is covalently cross-linked (Glycyl lysine isopeptide (Lys-Gly) (interchain with G-Cter in SUMO1); alternate). Lysine 293 participates in a covalent cross-link: Glycyl lysine isopeptide (Lys-Gly) (interchain with G-Cter in SUMO2); alternate. Threonine 301 is modified (phosphothreonine). The span at 308-317 (KRPRKRKSKQ) shows a compositional bias: basic residues.

Binds to the FHA domain of MKI67; this interaction is enhanced in mitosis. In terms of processing, phosphorylated. Citrullinated by PADI4. Expressed in brain, heart, hind limb muscles, intestine, liver, skin and spleen.

The protein resides in the nucleus. It localises to the nucleolus. The protein localises to the chromosome. The chain is MKI67 FHA domain-interacting nucleolar phosphoprotein (Nifk) from Mus musculus (Mouse).